Reading from the N-terminus, the 388-residue chain is Succinate--CoA ligase [ADP-forming] subunit beta (388 aa).

One can recognise an ATP-grasp domain in the interval 9–244 (KEILRKFGVA…LDEEDPAEIE (236 aa)). ATP is bound by residues Lys46, 53–55 (GRG), Glu99, Ala102, and Glu107. Residues Asn199 and Asp213 each coordinate Mg(2+). Substrate contacts are provided by residues Asn264 and 321-323 (GIM).

It belongs to the succinate/malate CoA ligase beta subunit family. Heterotetramer of two alpha and two beta subunits. Requires Mg(2+) as cofactor.

It carries out the reaction succinate + ATP + CoA = succinyl-CoA + ADP + phosphate. The catalysed reaction is GTP + succinate + CoA = succinyl-CoA + GDP + phosphate. Its pathway is carbohydrate metabolism; tricarboxylic acid cycle; succinate from succinyl-CoA (ligase route): step 1/1. In terms of biological role, succinyl-CoA synthetase functions in the citric acid cycle (TCA), coupling the hydrolysis of succinyl-CoA to the synthesis of either ATP or GTP and thus represents the only step of substrate-level phosphorylation in the TCA. The beta subunit provides nucleotide specificity of the enzyme and binds the substrate succinate, while the binding sites for coenzyme A and phosphate are found in the alpha subunit. The sequence is that of Succinate--CoA ligase [ADP-forming] subunit beta from Burkholderia vietnamiensis (strain G4 / LMG 22486) (Burkholderia cepacia (strain R1808)).